We begin with the raw amino-acid sequence, 248 residues long: Triosephosphate isomerase (248 aa).

Substrate-binding residues include asparagine 11 and lysine 13. Histidine 95 serves as the catalytic Electrophile. Glutamate 165 (proton acceptor) is an active-site residue.

The protein belongs to the triosephosphate isomerase family. Homodimer.

The protein localises to the cytoplasm. The catalysed reaction is dihydroxyacetone phosphate = methylglyoxal + phosphate. The enzyme catalyses D-glyceraldehyde 3-phosphate = dihydroxyacetone phosphate. Its pathway is carbohydrate degradation; glycolysis; D-glyceraldehyde 3-phosphate from glycerone phosphate: step 1/1. The protein operates within carbohydrate biosynthesis; gluconeogenesis. In terms of biological role, triosephosphate isomerase is an extremely efficient metabolic enzyme that catalyzes the interconversion between dihydroxyacetone phosphate (DHAP) and D-glyceraldehyde-3-phosphate (G3P) in glycolysis and gluconeogenesis. Functionally, it is also responsible for the non-negligible production of methylglyoxal a reactive cytotoxic side-product that modifies and can alter proteins, DNA and lipids. The chain is Triosephosphate isomerase (TPI1) from Gallus gallus (Chicken).